Reading from the N-terminus, the 361-residue chain is Tetrathionate reductase subunit C (361 aa).

A run of 9 helical transmembrane segments spans residues 26–46 (FSYA…LALL), 53–73 (AIPM…LGPL), 104–124 (ALYG…FALL), 160–180 (LAAI…MLFF), 193–213 (LMLP…ALIL), 233–253 (GAAA…WGMW), 258–278 (FAAV…TFIL), 288–308 (ITPI…WNLI), and 334–354 (AVSP…IFPM).

It belongs to the NrfD family. In terms of assembly, probably composed of three subunits: TtrA, TtrB and TtrC.

Its subcellular location is the cell membrane. In terms of biological role, part of a membrane-bound tetrathionate reductase that catalyzes the reduction of tetrathionate to thiosulfate. TtrC probably anchors TtrA and TtrB to the external face of the cytoplasmic membrane. May transfer electrons from membrane quinol to TtrB. This chain is Tetrathionate reductase subunit C (ttrC), found in Archaeoglobus fulgidus (strain ATCC 49558 / DSM 4304 / JCM 9628 / NBRC 100126 / VC-16).